A 488-amino-acid polypeptide reads, in one-letter code: Aspartyl/glutamyl-tRNA(Asn/Gln) amidotransferase subunit B (488 aa).

The protein belongs to the GatB/GatE family. GatB subfamily. Heterotrimer of A, B and C subunits.

The catalysed reaction is L-glutamyl-tRNA(Gln) + L-glutamine + ATP + H2O = L-glutaminyl-tRNA(Gln) + L-glutamate + ADP + phosphate + H(+). It catalyses the reaction L-aspartyl-tRNA(Asn) + L-glutamine + ATP + H2O = L-asparaginyl-tRNA(Asn) + L-glutamate + ADP + phosphate + 2 H(+). Functionally, allows the formation of correctly charged Asn-tRNA(Asn) or Gln-tRNA(Gln) through the transamidation of misacylated Asp-tRNA(Asn) or Glu-tRNA(Gln) in organisms which lack either or both of asparaginyl-tRNA or glutaminyl-tRNA synthetases. The reaction takes place in the presence of glutamine and ATP through an activated phospho-Asp-tRNA(Asn) or phospho-Glu-tRNA(Gln). In Ralstonia pickettii (strain 12J), this protein is Aspartyl/glutamyl-tRNA(Asn/Gln) amidotransferase subunit B.